The sequence spans 951 residues: PE-PGRS family protein PE_PGRS3 (951 aa).

The PE domain maps to 4 to 94; that stretch reads VIAAPEVIAA…GAYAAAEAAA (91 aa). The segment covering 887–919 has biased composition (basic residues); it reads CRRQRRADRQRRQRRQRRQSRGHARCRRHRRAA. A disordered region spans residues 887-951; the sequence is CRRQRRADRQ…GISCSPQMMP (65 aa).

Belongs to the mycobacterial PE family. PGRS subfamily.

The protein localises to the cell outer membrane. Its subcellular location is the secreted. The protein resides in the cell wall. It localises to the cell surface. Its function is as follows. The arginine-rich C-terminal region protrudes from the mycobacterial membrane and mediates M.tuberculosis entry into host epithelial cells. May serve as a bridge between mycobacteria and host cells by interacting with specific host phospholipids and extracting them from host cells, for their direct integration or as a source of phosphate, during phases of TB pathogenesis when M.tuberculosis is short of phosphate supply. This chain is PE-PGRS family protein PE_PGRS3 (PE_PGRS3), found in Mycobacterium tuberculosis (strain CDC 1551 / Oshkosh).